A 169-amino-acid polypeptide reads, in one-letter code: S-ribosylhomocysteine lyase (169 aa).

Residues His54, His58, and Cys128 each contribute to the Fe cation site.

It belongs to the LuxS family. In terms of assembly, homodimer. It depends on Fe cation as a cofactor.

It catalyses the reaction S-(5-deoxy-D-ribos-5-yl)-L-homocysteine = (S)-4,5-dihydroxypentane-2,3-dione + L-homocysteine. Its function is as follows. Involved in the synthesis of autoinducer 2 (AI-2) which is secreted by bacteria and is used to communicate both the cell density and the metabolic potential of the environment. The regulation of gene expression in response to changes in cell density is called quorum sensing. Catalyzes the transformation of S-ribosylhomocysteine (RHC) to homocysteine (HC) and 4,5-dihydroxy-2,3-pentadione (DPD). This is S-ribosylhomocysteine lyase from Shewanella baltica (strain OS223).